The following is a 354-amino-acid chain: Homer protein homolog 1 (354 aa).

Residues 1–110 enclose the WH1 domain; that stretch reads MGEQPIFSTR…EKFQEFKEAA (110 aa). Gly-2 bears the N-acetylglycine mark. Residues 114-172 are disordered; sequence KEKSQEKMELTSTPSQESAGGDLQSPLTPESINGTDDERTPDLTQNSEPRPEPTQNALP. Composition is skewed to polar residues over residues 138–147 and 155–172; these read SPLTPESING and DLTQ…NALP. Residues 181–352 adopt a coiled-coil conformation; sequence KHWEAELATL…LRDNLAKLLE (172 aa). The segment at 290–354 is required for tetramerization; the sequence is KLQEVEIRNK…DNLAKLLERS (65 aa). Ser-306 carries the post-translational modification Phosphoserine.

The protein belongs to the Homer family. As to quaternary structure, tetramer; this tetrameric structure is critical for forming the high-order complex with SHANK1, which in turn is necessary for the structural and functional integrity of dendritic spines. Interacts with GRM1, GRM5, ITPR1, DNM3, RYR1, RYR2 and SHANK3. Interacts with IFT57 and OPHN1. Encodes a coiled-coil structure that mediates homo- and heteromultimerization. Interacts with SHANK1; forms high-order polymerized complex with a mesh-like network structure, at least composed of SHANK1, HOMER1 and DLGAP1; the complex formation is SHANK1 multimerization dependent. Interacts with NFATC4. Interacts with DAGLA (via PPXXF motif); this interaction is required for the cell membrane localization of DAGLA. Interacts with SRGAP2.

The protein localises to the cytoplasm. It localises to the postsynaptic density. Its subcellular location is the synapse. The protein resides in the cell projection. It is found in the dendritic spine. Its function is as follows. Postsynaptic density scaffolding protein. Binds and cross-links cytoplasmic regions of GRM1, GRM5, ITPR1, DNM3, RYR1, RYR2, SHANK1 and SHANK3. By physically linking GRM1 and GRM5 with ER-associated ITPR1 receptors, it aids the coupling of surface receptors to intracellular calcium release. May also couple GRM1 to PI3 kinase through its interaction with AGAP2. Forms a high-order complex with SHANK1, which in turn is necessary for the structural and functional integrity of dendritic spines. Negatively regulates T cell activation by inhibiting the calcineurin-NFAT pathway. Acts by competing with calcineurin/PPP3CA for NFAT protein binding, hence preventing NFAT activation by PPP3CA. This chain is Homer protein homolog 1, found in Bos taurus (Bovine).